Consider the following 180-residue polypeptide: dCTP deaminase, dUMP-forming (180 aa).

Residues 96-101 (RSSLGR), Asp-113, 121-123 (TLE), Gln-142, Tyr-156, and Gln-163 each bind dCTP. Residue Glu-123 is the Proton donor/acceptor of the active site.

This sequence belongs to the dCTP deaminase family. As to quaternary structure, homotrimer.

It catalyses the reaction dCTP + 2 H2O = dUMP + NH4(+) + diphosphate. It functions in the pathway pyrimidine metabolism; dUMP biosynthesis; dUMP from dCTP: step 1/1. Its function is as follows. Bifunctional enzyme that catalyzes both the deamination of dCTP to dUTP and the hydrolysis of dUTP to dUMP without releasing the toxic dUTP intermediate. This chain is dCTP deaminase, dUMP-forming, found in Aquifex aeolicus (strain VF5).